We begin with the raw amino-acid sequence, 263 residues long: Imidazole glycerol phosphate synthase subunit HisF (263 aa).

Residues Asp-11 and Asp-130 contribute to the active site.

This sequence belongs to the HisA/HisF family. In terms of assembly, heterodimer of HisH and HisF.

Its subcellular location is the cytoplasm. It catalyses the reaction 5-[(5-phospho-1-deoxy-D-ribulos-1-ylimino)methylamino]-1-(5-phospho-beta-D-ribosyl)imidazole-4-carboxamide + L-glutamine = D-erythro-1-(imidazol-4-yl)glycerol 3-phosphate + 5-amino-1-(5-phospho-beta-D-ribosyl)imidazole-4-carboxamide + L-glutamate + H(+). The protein operates within amino-acid biosynthesis; L-histidine biosynthesis; L-histidine from 5-phospho-alpha-D-ribose 1-diphosphate: step 5/9. In terms of biological role, IGPS catalyzes the conversion of PRFAR and glutamine to IGP, AICAR and glutamate. The HisF subunit catalyzes the cyclization activity that produces IGP and AICAR from PRFAR using the ammonia provided by the HisH subunit. This chain is Imidazole glycerol phosphate synthase subunit HisF, found in Herpetosiphon aurantiacus (strain ATCC 23779 / DSM 785 / 114-95).